A 303-amino-acid polypeptide reads, in one-letter code: Zinc import ATP-binding protein ZnuC (303 aa).

One can recognise an ABC transporter domain in the interval 17–232 (VSLENVGVLR…PEYVRLFGSR (216 aa)). 49–56 (GPNGSGKS) is a binding site for ATP. A disordered region spans residues 263 to 303 (DHCHPDDGHHAHEHGHAGHEHDHDHPDHAHPHAHEAGERHA).

It belongs to the ABC transporter superfamily. Zinc importer (TC 3.A.1.15.5) family. The complex is composed of two ATP-binding proteins (ZnuC), two transmembrane proteins (ZnuB) and a solute-binding protein (ZnuA).

Its subcellular location is the cell inner membrane. The enzyme catalyses Zn(2+)(out) + ATP(in) + H2O(in) = Zn(2+)(in) + ADP(in) + phosphate(in) + H(+)(in). Its function is as follows. Part of the ABC transporter complex ZnuABC involved in zinc import. Responsible for energy coupling to the transport system. The sequence is that of Zinc import ATP-binding protein ZnuC from Rhizobium johnstonii (strain DSM 114642 / LMG 32736 / 3841) (Rhizobium leguminosarum bv. viciae).